The primary structure comprises 628 residues: Chaperone protein HtpG (628 aa).

The interval 1-334 is a; substrate-binding; sequence MTTTDTASET…SEDLPLNLSR (334 aa). Positions 335–550 are b; it reads EMLQNNPQLA…GFGPDRELEK (216 aa). The interval 551–628 is c; it reads MLARANKGAA…LVLRGLVAHG (78 aa).

The protein belongs to the heat shock protein 90 family. In terms of assembly, homodimer.

The protein localises to the cytoplasm. Molecular chaperone. Has ATPase activity. The polypeptide is Chaperone protein HtpG (Rhodopseudomonas palustris (strain BisB5)).